The chain runs to 355 residues: C-C chemokine receptor type 8 (355 aa).

The Extracellular portion of the chain corresponds to 1-35 (MDYTLDLSVTTVTDYYYPDIFSSPCDAELIQTNGK). The chain crosses the membrane as a helical span at residues 36 to 63 (LLLAVFYCLLFVFSLLGNSLVILVLVVC). The Cytoplasmic portion of the chain corresponds to 64–73 (KKLRSITDVY). Residues 74 to 93 (LLNLALSDLLFVFSFPFQTY) form a helical membrane-spanning segment. Residues 94–107 (YLLDQWVFGTVMCK) lie on the Extracellular side of the membrane. A disulfide bond links Cys-106 and Cys-183. Residues 108-129 (VVSGFYYIGFYSSMFFITLMSV) traverse the membrane as a helical segment. Residues 130–146 (DRYLAVVHAVYALKVRT) lie on the Cytoplasmic side of the membrane. The chain crosses the membrane as a helical span at residues 147 to 171 (IRMGTTLCLAVWLTAIMATIPLLVF). Over 172 to 202 (YQVASEDGVLQCYSFYNQQTLKWKIFTNFKM) the chain is Extracellular. A helical membrane pass occupies residues 203 to 222 (NILGLLIPFTIFMFCYIKIL). Residues 223 to 238 (HQLKRCQNHNKTKAIR) lie on the Cytoplasmic side of the membrane. The helical transmembrane segment at 239 to 263 (LVLIVVIASLLFWVPFNVVLFLTSL) threads the bilayer. Residues 264-280 (HSMHILDGCSISQQLTY) are Extracellular-facing. The helical transmembrane segment at 281-304 (ATHVTEIISFTHCCVNPVIYAFVG) threads the bilayer. At 305–355 (EKFKKHLSEIFQKSCSQIFNYLGRQMPRESCEKSSSCQQHSSRSSSVDYIL) the chain is on the cytoplasmic side.

It belongs to the G-protein coupled receptor 1 family.

It is found in the cell membrane. Its function is as follows. Receptor for the chemokine CCL1/SCYA1/I-309. May regulate monocyte chemotaxis and thymic cell line apoptosis. Alternative coreceptor with CD4 for HIV-1 infection. The sequence is that of C-C chemokine receptor type 8 (CCR8) from Homo sapiens (Human).